Reading from the N-terminus, the 127-residue chain is Histone H2B type 1-A (127 aa).

Positions 1–36 (MPEVSSKGATISKKGFKKAVVKTQKKEGKKRKRTRK) are disordered. An N-acetylproline modification is found at proline 2. N6-acetyllysine; alternate is present on residues lysine 7, lysine 13, lysine 14, lysine 17, lysine 18, lysine 22, and lysine 25. 8 positions are modified to N6-crotonyllysine; alternate: lysine 7, lysine 13, lysine 14, lysine 17, lysine 18, lysine 22, lysine 25, and lysine 36. N6-lactoyllysine; alternate occurs at positions 7 and 13. Lysine 7 participates in a covalent cross-link: Glycyl lysine isopeptide (Lys-Gly) (interchain with G-Cter in SUMO2); alternate. Residues lysine 17, lysine 18, lysine 22, and lysine 25 each carry the N6-lactoyllysine; alternate modification. Lysine 22 participates in a covalent cross-link: Glycyl lysine isopeptide (Lys-Gly) (interchain with G-Cter in SUMO2); alternate. At lysine 36 the chain carries N6-succinyllysine; alternate. Lysine 36 is covalently cross-linked (Glycyl lysine isopeptide (Lys-Gly) (interchain with G-Cter in ubiquitin); alternate). The residue at position 38 (serine 38) is a Phosphoserine. Residue lysine 45 is modified to N6-lactoyllysine; alternate. The residue at position 48 (lysine 48) is an N6-methyllysine. Lysine 59 is subject to N6,N6-dimethyllysine. Arginine 81 carries the post-translational modification Dimethylated arginine. Serine 86 carries the post-translational modification Phosphoserine. Position 87 is an N6-acetyllysine; alternate (lysine 87). Lysine 87 is modified (N6-lactoyllysine; alternate). The residue at position 87 (lysine 87) is an N6,N6,N6-trimethyllysine; alternate. 2 positions are modified to omega-N-methylarginine: arginine 88 and arginine 94. At lysine 110 the chain carries N6-lactoyllysine; alternate. An N6-methyllysine modification is found at lysine 110. Threonine 117 is modified (phosphothreonine). N6-lactoyllysine; alternate is present on residues lysine 118 and lysine 122. An N6-succinyllysine; alternate mark is found at lysine 118 and lysine 122. Lysine 118 carries the N6-methylated lysine; alternate modification. Lysine 122 is covalently cross-linked (Glycyl lysine isopeptide (Lys-Gly) (interchain with G-Cter in ubiquitin); alternate).

The protein belongs to the histone H2B family. As to quaternary structure, the nucleosome is a histone octamer containing two molecules each of H2A, H2B, H3 and H4 assembled in one H3-H4 heterotetramer and two H2A-H2B heterodimers. In terms of processing, monoubiquitination at Lys-36 (H2BK34Ub) by the MSL1/MSL2 dimer is required for histone H3 'Lys-4' (H3K4me) and 'Lys-79' (H3K79me) methylation and transcription activation at specific gene loci, such as HOXA9 and MEIS1 loci. Similarly, monoubiquitination at Lys-122 (H2BK120Ub) by the RNF20/40 complex gives a specific tag for epigenetic transcriptional activation and is also prerequisite for histone H3 'Lys-4' and 'Lys-79' methylation. It also functions cooperatively with the FACT dimer to stimulate elongation by RNA polymerase II. H2BK120Ub also acts as a regulator of mRNA splicing: deubiquitination by USP49 is required for efficient cotranscriptional splicing of a large set of exons. Crotonylation (Kcr) is specifically present in male germ cells and marks testis-specific genes in post-meiotic cells, including X-linked genes that escape sex chromosome inactivation in haploid cells. Crotonylation marks active promoters and enhancers and confers resistance to transcriptional repressors. It is also associated with post-meiotically activated genes on autosomes. Post-translationally, acetylated during spermatogenesis. Acetylated form is most abundant in spermatogonia compared to spermatocytes and round spermatids. In terms of processing, phosphorylated at Thr-117 in spermatogonia, spermatocytes and round spermatids. Methylated at Lys-118 in spermatogonia, spermatocytes and round spermatids. Post-translationally, lactylated in macrophages by EP300/P300 by using lactoyl-CoA directly derived from endogenous or exogenous lactate, leading to stimulates gene transcription. As to expression, mainly expressed in testis, and the corresponding protein is also present in mature sperm (at protein level). Also found in some fat cells.

The protein localises to the nucleus. Its subcellular location is the chromosome. In terms of biological role, variant histone specifically required to direct the transformation of dissociating nucleosomes to protamine in male germ cells. Entirely replaces classical histone H2B prior nucleosome to protamine transition and probably acts as a nucleosome dissociating factor that creates a more dynamic chromatin, facilitating the large-scale exchange of histones. Core component of nucleosome. Nucleosomes wrap and compact DNA into chromatin, limiting DNA accessibility to the cellular machineries which require DNA as a template. Histones thereby play a central role in transcription regulation, DNA repair, DNA replication and chromosomal stability. DNA accessibility is regulated via a complex set of post-translational modifications of histones, also called histone code, and nucleosome remodeling. Also found in fat cells, its function and the presence of post-translational modifications specific to such cells are still unclear. This Homo sapiens (Human) protein is Histone H2B type 1-A.